Consider the following 878-residue polypeptide: MTSAEIREAFLRYFESQGHTRVASSSLVPANDPTLLFTNAGMNQFKDCFLGLEKRDYVRATTSQKCVRAGGKHNDLDNVGYTARHHTFFEMLGNFSFGDYFKRDALTFAWDFLTSEQWLGLPKDKLYVTVYHTDDEAYDIWNKEIGLAADRIIRIGDNKGEKYASDNFWAMGDTGPCGPCSEIFFDHGDHIWGGLPGTPEEDGDRFIEIWNNVFMQFNRTADGVLHPLPAPSVDTGMGLERISAVLQHVNSNYDIDLFQHLIKSACEIINVKDEGQPSLRVVADHARSCCFLIADGVNPSNEGRGYVLRRIIRRAVRHGNKLGATGTFFYKMLQPLIDVMGDAYPELKNDQARIEATLIREEEQFAKTLEQGLKLLEGELTQLSGKVIPGETVFKLYDTYGFPTDLTADIARERDLEIDEVGFEREMEAQRRRARDAGKFAVDYNSIVKVEGETQFDGYHATAGQGEIVAIYKDGEQVDEVVEGDEALIVLNQTPFYAESGGQIGDTGLFKNDTGIFEVQDTKKSGGAFVHQGIVTMGSLKAAQHVDAIVKADIRAATARNHSATHLLHAALRQILGTHVQQKGSLVASDILRFDFANDQPVSFEQLQEIERLVNAEVIANSAVTTELLDIESAKAKGAMMLFGEKYGDEVRVLSMGSVIDEHNFSIELCGGIHVQRTGDIGLFKIISEGGVAAGIRRIEAVTGTKALEVVQKADADIQHINSLLKAQKDQTVERVQAAVEQTSALHKQIEQLNQKLANFQAAELLSQVQNIAGRSTLITTVQNIDAKSLRNLHDSVKSKLEDAVIVLAGLEGDKISLIASVAKQYTAHLKAGDIIKHLATELGGKGGGKPDLAQGGAPLNEKFEHVIAALPAWLEQH.

His562, His566, Cys670, and His674 together coordinate Zn(2+).

It belongs to the class-II aminoacyl-tRNA synthetase family. Zn(2+) serves as cofactor.

It is found in the cytoplasm. The catalysed reaction is tRNA(Ala) + L-alanine + ATP = L-alanyl-tRNA(Ala) + AMP + diphosphate. Its function is as follows. Catalyzes the attachment of alanine to tRNA(Ala) in a two-step reaction: alanine is first activated by ATP to form Ala-AMP and then transferred to the acceptor end of tRNA(Ala). Also edits incorrectly charged Ser-tRNA(Ala) and Gly-tRNA(Ala) via its editing domain. The protein is Alanine--tRNA ligase of Acinetobacter baylyi (strain ATCC 33305 / BD413 / ADP1).